The sequence spans 331 residues: Ketol-acid reductoisomerase (NADP(+)) (331 aa).

The KARI N-terminal Rossmann domain occupies 2-182; sequence AKVYYDEDAN…GGTKGGVLET (181 aa). Residues 25–28, S51, S53, and 83–86 contribute to the NADP(+) site; these read YGSQ and DEKQ. H108 is an active-site residue. NADP(+) is bound at residue G134. In terms of domain architecture, KARI C-terminal knotted spans 183-328; that stretch reads TFKDETETDL…VELRAMMPWL (146 aa). Positions 191, 195, 227, and 231 each coordinate Mg(2+). S252 serves as a coordination point for substrate.

Belongs to the ketol-acid reductoisomerase family. It depends on Mg(2+) as a cofactor.

It carries out the reaction (2R)-2,3-dihydroxy-3-methylbutanoate + NADP(+) = (2S)-2-acetolactate + NADPH + H(+). The catalysed reaction is (2R,3R)-2,3-dihydroxy-3-methylpentanoate + NADP(+) = (S)-2-ethyl-2-hydroxy-3-oxobutanoate + NADPH + H(+). It functions in the pathway amino-acid biosynthesis; L-isoleucine biosynthesis; L-isoleucine from 2-oxobutanoate: step 2/4. The protein operates within amino-acid biosynthesis; L-valine biosynthesis; L-valine from pyruvate: step 2/4. Involved in the biosynthesis of branched-chain amino acids (BCAA). Catalyzes an alkyl-migration followed by a ketol-acid reduction of (S)-2-acetolactate (S2AL) to yield (R)-2,3-dihydroxy-isovalerate. In the isomerase reaction, S2AL is rearranged via a Mg-dependent methyl migration to produce 3-hydroxy-3-methyl-2-ketobutyrate (HMKB). In the reductase reaction, this 2-ketoacid undergoes a metal-dependent reduction by NADPH to yield (R)-2,3-dihydroxy-isovalerate. This is Ketol-acid reductoisomerase (NADP(+)) from Clostridium novyi (strain NT).